We begin with the raw amino-acid sequence, 402 residues long: Adenylyltransferase and sulfurtransferase MOCS3 (402 aa).

Residues Gly47, Asp68, 75 to 79, Lys92, and 136 to 137 each bind ATP; these read DNLHR and DN. The Zn(2+) site is built by Cys178 and Cys181. The active-site Glycyl thioester intermediate; for adenylyltransferase activity is the Cys195. Zn(2+)-binding residues include Cys253 and Cys256. Residues 303-400 enclose the Rhodanese domain; that stretch reads AARKQFLLDT…WALKINDEFP (98 aa). The active-site Cysteine persulfide intermediate; for sulfurtransferase activity is the Cys359.

In the N-terminal section; belongs to the HesA/MoeB/ThiF family. UBA4 subfamily. Zn(2+) is required as a cofactor.

The protein resides in the cytoplasm. The protein localises to the cytosol. The catalysed reaction is [molybdopterin-synthase sulfur-carrier protein]-C-terminal Gly-Gly + ATP + H(+) = [molybdopterin-synthase sulfur-carrier protein]-C-terminal Gly-Gly-AMP + diphosphate. It catalyses the reaction [molybdopterin-synthase sulfur-carrier protein]-C-terminal Gly-Gly-AMP + S-sulfanyl-L-cysteinyl-[cysteine desulfurase] + AH2 = [molybdopterin-synthase sulfur-carrier protein]-C-terminal-Gly-aminoethanethioate + L-cysteinyl-[cysteine desulfurase] + A + AMP + 2 H(+). The protein operates within tRNA modification; 5-methoxycarbonylmethyl-2-thiouridine-tRNA biosynthesis. It participates in cofactor biosynthesis; molybdopterin biosynthesis. Functionally, plays a central role in 2-thiolation of mcm(5)S(2)U at tRNA wobble positions of cytosolic tRNA(Lys), tRNA(Glu) and tRNA(Gln). Also essential during biosynthesis of the molybdenum cofactor. Acts by mediating the C-terminal thiocarboxylation of sulfur carriers URM1 and MOCS2A. Its N-terminus first activates URM1 and MOCS2A as acyl-adenylates (-COAMP), then the persulfide sulfur on the catalytic cysteine is transferred to URM1 and MOCS2A to form thiocarboxylation (-COSH) of their C-terminus. The reaction probably involves hydrogen sulfide that is generated from the persulfide intermediate and that acts as a nucleophile towards URM1 and MOCS2A. Subsequently, a transient disulfide bond is formed. Does not use thiosulfate as sulfur donor; NFS1 probably acting as a sulfur donor for thiocarboxylation reactions. The polypeptide is Adenylyltransferase and sulfurtransferase MOCS3 (Caenorhabditis briggsae).